A 399-amino-acid chain; its full sequence is Probable 3-ketosteroid-9-alpha-monooxygenase, oxygenase component (399 aa).

A Rieske domain is found at 26 to 128; sequence WHCLGLVRDF…VAEVSGQLFV (103 aa). Residues C67, H69, C86, and H89 each contribute to the [2Fe-2S] cluster site. Fe cation is bound by residues N175, H181, H186, and D307.

As to quaternary structure, homotrimer. The two-component system 3-ketosteroid-9-alpha-monooxygenase is composed of an oxygenase component KshA and a reductase component KshB. [2Fe-2S] cluster serves as cofactor. It depends on Fe cation as a cofactor.

Functionally, could catalyze the introduction of a 9alpha-hydroxyl moiety into the ring B of 3-ketosteroid substrates. This chain is Probable 3-ketosteroid-9-alpha-monooxygenase, oxygenase component, found in Rhodococcus rhodochrous.